Consider the following 348-residue polypeptide: Fe-S cluster assembly protein DRE2 (348 aa).

The interval 1 to 162 (MSQYKTGLLL…KKASSSTSNL (162 aa)) is N-terminal SAM-like domain. The disordered stretch occupies residues 137–170 (KTNNTKLQSGSKLPTFKKASSSTSNLPSFKKADH). Positions 144–163 (QSGSKLPTFKKASSSTSNLP) are enriched in polar residues. The interval 163–242 (PSFKKADHSR…EEELIDEDGS (80 aa)) is linker. Phosphoserine is present on S206. [2Fe-2S] cluster-binding residues include C252, C263, C266, and C268. The tract at residues 252–268 (CGKSKTKKKKACKDCTC) is fe-S binding site A. C311, C314, C322, and C325 together coordinate [4Fe-4S] cluster. 2 short sequence motifs (cx2C motif) span residues 311 to 314 (CGSC) and 322 to 325 (CSGC). Positions 311-325 (CGSCSLGDAFRCSGC) are fe-S binding site B.

The protein belongs to the anamorsin family. Monomer. Interacts with TAH18. Interacts with MIA40. It depends on [2Fe-2S] cluster as a cofactor. [4Fe-4S] cluster serves as cofactor.

Its subcellular location is the cytoplasm. It localises to the mitochondrion intermembrane space. Its function is as follows. Component of the cytosolic iron-sulfur (Fe-S) protein assembly (CIA) machinery required for the maturation of extramitochondrial Fe-S proteins. Part of an electron transfer chain functioning in an early step of cytosolic Fe-S biogenesis, facilitating the de novo assembly of a [4Fe-4S] cluster on the scaffold complex CFD1-NBP35. Electrons are transferred to DRE2 from NADPH via the FAD- and FMN-containing protein TAH18. TAH18-DRE2 are also required for the assembly of the diferric tyrosyl radical cofactor of ribonucleotide reductase (RNR), probably by providing electrons for reduction during radical cofactor maturation in the catalytic small subunit RNR2. The protein is Fe-S cluster assembly protein DRE2 of Saccharomyces cerevisiae (strain Lalvin EC1118 / Prise de mousse) (Baker's yeast).